A 300-amino-acid chain; its full sequence is MNTLVLKIDAILSKHLKKQLAPYTINSQNTYVAFAAKKNGVTVLLYKSGKLVLQGNGANALAQELNLPVAKTVFEASNNSQDIPIIGSDEVGNGSYFGGIAVVASFVDPKDHSFLKKLGVDDSKKLSDKTIQQIAPLLEKQIPHQSLLLSPKKYNELVGKSKPYNAISIKVALHNQAIFLLLQKGIQPKQIVIDAFTSQSNYEKHLKKEKSHFPNPLTFQEKAESHYLAVAVSSIIARNLFLDNLDQLGQDLGYQLPSGAGSASDKVASQLLAAYGMSSLEYSAKLHFANTHKAQALLTK.

The RNase H type-2 domain maps to 83-300 (IPIIGSDEVG…THKAQALLTK (218 aa)). Residues Asp-89, Glu-90, and Asp-194 each contribute to the a divalent metal cation site.

This sequence belongs to the RNase HII family. RnhC subfamily. Requires Mn(2+) as cofactor. Mg(2+) is required as a cofactor.

The protein localises to the cytoplasm. The enzyme catalyses Endonucleolytic cleavage to 5'-phosphomonoester.. In terms of biological role, endonuclease that specifically degrades the RNA of RNA-DNA hybrids. In Streptococcus pyogenes serotype M4 (strain MGAS10750), this protein is Ribonuclease HIII.